The chain runs to 473 residues: Sulfhydrylase-like protein lolC2 (473 aa).

Residue Lys-226 is modified to N6-(pyridoxal phosphate)lysine.

Belongs to the trans-sulfuration enzymes family. The cofactor is pyridoxal 5'-phosphate.

It functions in the pathway alkaloid biosynthesis. Its function is as follows. Sulfhydrylase-like protein; part of the gene cluster that mediates the biosynthesis of loline alkaloids, potent insecticidal agents composed of a pyrrolizidine ring system and an uncommon ether bridge linking carbons 2 and 7. Lolines are structurally differentiated by the various modifications of the L-amino group and include norloline, loline, N-methylloline, N-acetylloline, N-acetylnorloline, and N-formylloline. The first committed step is the condensation of O-acetyl-L-homoserine (derived from L-aspartic acid) and L-proline, probably catalyzed by the gamma-type pyridoxal 5'-phosphate(PLP)-dependent enzyme lolC, to give the diamino diacid, NACPP. Ensuing cyclization, decarboxylation, and acetylation steps yield 1-exo-acetamidopyrrolizidine (AcAP). LolO is required for installation of the ether bridge upon the pathway intermediate, 1-exo-acetamidopyrrolizidine (AcAP). In sequential 2-oxoglutarate- and O(2)-consuming steps, lolO removes hydrogens from C2 and C7 of AcAP to form both carbon-oxygen bonds in N-acetylnorloline (NANL), the precursor to all other lolines. The enzymes lolD, lolE, lolF and lolT have also been proposed to be involved in the ether-bridge installation. Further processing of the exocyclic moiety of NANL by fungal N-acetamidase (LolN), methyltransferase (LolM), and cytochrome P450 (LolP) enzymes, with occasional involvement of a plant acetyltransferase, generates the other known lolines. LolN transforms NANL to norlonine which is monomethylated and dimethylated to respectively lonine and N-methyllonine (NML) by lolM. LolP catalyzes hydroxylation of the methyl group in N-methylloline (NML) and further oxygenation to N-formylloline (NFL). A plant acetyltransferase is responsible for the acetylation of loline to form N-acetylloline (NAL). LolA might interact with aspartate kinase to prevent feedback inhibition of its activity by these end products and thereby promote production of L-homoserine from L-aspartate. This chain is Sulfhydrylase-like protein lolC2, found in Epichloe uncinata (Endophyte fungus).